The primary structure comprises 73 residues: Mu-conotoxin SIIIA (73 aa).

A signal peptide spans 1–20 (MMSKLGVLLTVCPLLFPLTA). Residues 20–40 (ALPPDGDQPADRPAERMQDDI) are disordered. The propeptide occupies 21-49 (LPPDGDQPADRPAERMQDDISSDEHPLFD). Residues 28–40 (PADRPAERMQDDI) are compositionally biased toward basic and acidic residues. Gln52 is subject to Pyrrolidone carboxylic acid. Intrachain disulfides connect Cys54/Cys64, Cys55/Cys70, and Cys59/Cys71. Position 71 is a cysteine amide (Cys71).

The protein belongs to the conotoxin M superfamily. As to expression, expressed by the venom duct.

The protein localises to the secreted. Mu-conotoxins block voltage-gated sodium channels (Nav). This toxin moderately blocks rNav1.1/SCN1A, rNav1.2/SCN2A, rNav1.3/SCN3A, rNav1.4/SCN4A, and mNav1.6/SCN8A. The protein is Mu-conotoxin SIIIA of Conus striatus (Striated cone).